Here is an 881-residue protein sequence, read N- to C-terminus: Receptor-like protein 41 (881 aa).

The first 21 residues, 1 to 21 (MSELLLRLNFLLLLLLSCVSP), serve as a signal peptide directing secretion. Residues 22–844 (SSFVTFNNPV…EEQEQVLNWE (823 aa)) lie on the Extracellular side of the membrane. N-linked (GlcNAc...) asparagine glycans are attached at residues asparagine 58, asparagine 70, asparagine 91, asparagine 109, and asparagine 145. 16 LRR repeats span residues 97–121 (FHELRSLLLIHNNFTSSSISSKFGM), 122–145 (LNKLEVLFLSSSGFLGQVPFSFSN), 146–169 (LSMLSALDLSDNELTGSLSFVRNL), 170–195 (RKLRVLDVSYNHFSGILNPNSSLFEL), 197–219 (HLTYLSLGSNSFTSSTLPYEFGN), 220–244 (LNKLELLDVSSNSFFGQVPPTISNL), 245–267 (TQLTELYLPLNDFTGSLPLVQNL), 268–291 (TKLSILALFGNHFSGTIPSSLFTM), 293–317 (FLSYLSLKGNNLNGSIEVPNSSSSS), 319–340 (LESLYLGKNHFEGKILKPISKL), 342–364 (NLKELDLSFLSTSYPIDLSLFSS), 365–390 (FKSLLVLDLTGDWISQAGLSSDSYIS), 391–412 (LTLEALYMKQCNISDFPNILKS), 413–437 (LPNLECIDVSNNRVSGKIPEWLWSL), 439–462 (RLSSVFIGDNLLTGFEGSSEILVN), and 463–486 (SSVQILVLDSNSLEGALPHLPLSI). A glycan (N-linked (GlcNAc...) asparagine) is linked at asparagine 189. N-linked (GlcNAc...) asparagine glycosylation is found at asparagine 243 and asparagine 266. N-linked (GlcNAc...) asparagine glycans are attached at residues asparagine 305 and asparagine 312. Residue asparagine 402 is glycosylated (N-linked (GlcNAc...) asparagine). An N-linked (GlcNAc...) asparagine glycan is attached at asparagine 462. The stretch at 487–506 (IYFSARYNRFKGDIPLSICN) is one LRR 17; degenerate repeat. N-linked (GlcNAc...) asparagine glycans are attached at residues asparagine 506 and asparagine 519. LRR repeat units lie at residues 507–528 (RSSLDVLDLRYNNFTGPIPPCL), 529–552 (SNLLFLNLRKNNLEGSIPDTYFAD), 554–576 (PLRSLDVGYNRLTGKLPRSLLNC), 578–599 (ALQFLSVDHNGIEDTFPFYLKV), 600–624 (LPKLQVLLLSSNKFYGPLSPPNQGS), 627–651 (FPELRILEIAGNKLTGSLPQDFFVN), 701–724 (TSSATIDLSGNRLEGEIPESIGLL), 725–748 (KALIALNLSNNAFTGHIPLSLANL), 749–772 (VKIESLDLSSNQLSGTIPNGLGTL), and 774–797 (FLAYVNVSHNQLNGEIPQGTQITG). Asparagine 575 carries an N-linked (GlcNAc...) asparagine glycan. Asparagine 731 is a glycosylation site (N-linked (GlcNAc...) asparagine). N-linked (GlcNAc...) asparagine glycosylation occurs at asparagine 779. A helical transmembrane segment spans residues 845–865 (GVAIGYGVGVLLGLAIAQLIA). Residues 866–881 (SYKPEWLACLIKSRNR) lie on the Cytoplasmic side of the membrane.

Belongs to the RLP family.

The protein localises to the cell membrane. In terms of biological role, may be involved in ABA-induced senescence responses. The chain is Receptor-like protein 41 from Arabidopsis thaliana (Mouse-ear cress).